Reading from the N-terminus, the 494-residue chain is Glycerol kinase (494 aa).

T13 lines the ADP pocket. Residues T13, T14, and S15 each coordinate ATP. Position 13 (T13) interacts with sn-glycerol 3-phosphate. Residue R17 participates in ADP binding. The sn-glycerol 3-phosphate site is built by R83, E84, Y135, and D244. Glycerol contacts are provided by R83, E84, Y135, D244, and Q245. The ADP site is built by T266 and G309. Residues T266, G309, Q313, and G410 each coordinate ATP. Residues G410 and N414 each coordinate ADP.

Belongs to the FGGY kinase family.

The enzyme catalyses glycerol + ATP = sn-glycerol 3-phosphate + ADP + H(+). It participates in polyol metabolism; glycerol degradation via glycerol kinase pathway; sn-glycerol 3-phosphate from glycerol: step 1/1. Inhibited by fructose 1,6-bisphosphate (FBP). In terms of biological role, key enzyme in the regulation of glycerol uptake and metabolism. Catalyzes the phosphorylation of glycerol to yield sn-glycerol 3-phosphate. This is Glycerol kinase from Shewanella sp. (strain MR-4).